The primary structure comprises 506 residues: Probable cytosol aminopeptidase (506 aa).

Mn(2+) contacts are provided by Lys270 and Asp275. Lys282 is a catalytic residue. Mn(2+) contacts are provided by Asp293, Asp352, and Glu354. Residue Arg356 is part of the active site.

Belongs to the peptidase M17 family. Requires Mn(2+) as cofactor.

Its subcellular location is the cytoplasm. It catalyses the reaction Release of an N-terminal amino acid, Xaa-|-Yaa-, in which Xaa is preferably Leu, but may be other amino acids including Pro although not Arg or Lys, and Yaa may be Pro. Amino acid amides and methyl esters are also readily hydrolyzed, but rates on arylamides are exceedingly low.. It carries out the reaction Release of an N-terminal amino acid, preferentially leucine, but not glutamic or aspartic acids.. In terms of biological role, presumably involved in the processing and regular turnover of intracellular proteins. Catalyzes the removal of unsubstituted N-terminal amino acids from various peptides. This is Probable cytosol aminopeptidase from Photorhabdus laumondii subsp. laumondii (strain DSM 15139 / CIP 105565 / TT01) (Photorhabdus luminescens subsp. laumondii).